The sequence spans 514 residues: Cytochrome P450 monooxygenase FUS8 (514 aa).

Residues 24–44 (VFENLTVTNTVCAFIALFIIV) traverse the membrane as a helical segment. 2 N-linked (GlcNAc...) asparagine glycosylation sites follow: asparagine 225 and asparagine 443. Residue cysteine 460 coordinates heme.

The protein belongs to the cytochrome P450 family. The cofactor is heme.

It is found in the membrane. It participates in mycotoxin biosynthesis. Its function is as follows. Cytochrome P450 monooxygenase; part of the gene cluster that mediates the biosynthesis of the mycotoxin fusarin C. Within the cluster, FUS1, FUS2, FUS8 and FUS9 are sufficient for fusarin production. The roles of the other FUS members are yet undetermined. The fusarin C synthetase FUS1 is responsible for the condensation of one acetyl-coenzyme A (CoA) unit with six malonyl-CoA units and the amide linkage of the arising heptaketide and homoserine, subsequently releasing the first intermediate, prefusarin, as an alcohol with an open ring structure. The cytochrome P450 monooxygenase FUS8 participates in multiple oxidation processes at carbon C-20 and is able to use the FUS1 product as substrate, resulting in formation of 20-hydroxy-prefusarin. This reaction seems to be essential before the 2-pyrrolidone ring closure can be catalyzed by FUS2, generating 20-hydroxy-fusarin. FUS8 is able to further oxidizes carbon C-20 after ring closure, resulting in the formation of carboxy-fusarin C. As the last step, FUS9 methylates the hydroxyl group at C-21 to generate fusarin C. Fusarin C can then rearrange to epi-fusarin C, the (z)-isomers, and fusarin A and fusarin D. In Gibberella fujikuroi (strain CBS 195.34 / IMI 58289 / NRRL A-6831) (Bakanae and foot rot disease fungus), this protein is Cytochrome P450 monooxygenase FUS8.